We begin with the raw amino-acid sequence, 1173 residues long: Pyruvate-flavodoxin oxidoreductase (1173 aa).

4Fe-4S ferredoxin-type domains follow at residues 681–710 (NVPV…PVLI) and 735–766 (YRLA…MQPL). Positions 690, 693, 696, 700, 744, 747, 750, 754, 810, 813, and 838 each coordinate [4Fe-4S] cluster. The segment covering 922 to 933 (GEGTRERAEKVG) has biased composition (basic and acidic residues). The interval 922–946 (GEGTRERAEKVGDTSGFANAREKSR) is disordered. C1075 provides a ligand contact to [4Fe-4S] cluster.

It belongs to the pyruvate:ferredoxin/flavodoxin oxidoreductase family. [4Fe-4S] cluster is required as a cofactor.

The enzyme catalyses oxidized [flavodoxin] + pyruvate + CoA + 2 H(+) = reduced [flavodoxin] + acetyl-CoA + CO2. Its function is as follows. Oxidoreductase required for the transfer of electrons from pyruvate to flavodoxin, which reduces nitrogenase. The protein is Pyruvate-flavodoxin oxidoreductase (nifJ) of Enterobacter agglomerans (Erwinia herbicola).